The primary structure comprises 274 residues: 2,3,4,5-tetrahydropyridine-2,6-dicarboxylate N-succinyltransferase (274 aa).

Substrate contacts are provided by Arg-104 and Asp-141.

Belongs to the transferase hexapeptide repeat family. In terms of assembly, homotrimer.

The protein resides in the cytoplasm. It carries out the reaction (S)-2,3,4,5-tetrahydrodipicolinate + succinyl-CoA + H2O = (S)-2-succinylamino-6-oxoheptanedioate + CoA. It participates in amino-acid biosynthesis; L-lysine biosynthesis via DAP pathway; LL-2,6-diaminopimelate from (S)-tetrahydrodipicolinate (succinylase route): step 1/3. With respect to regulation, inhibited by p-(chloromercuri)benzenesulfonic acid and cobalt. This chain is 2,3,4,5-tetrahydropyridine-2,6-dicarboxylate N-succinyltransferase (dapD), found in Unknown prokaryotic organism.